A 166-amino-acid polypeptide reads, in one-letter code: Phospholipase A2 inhibitor (166 aa).

The first 19 residues, 1-19 (MRLILLSGLLLLGIFLANG), serve as a signal peptide directing secretion. The 116-residue stretch at 46–161 (LRGAFLTVYK…CDDNLLVVCE (116 aa)) folds into the C-type lectin domain. Asparagine 61 and asparagine 122 each carry an N-linked (GlcNAc...) asparagine glycan. 2 cysteine pairs are disulfide-bonded: cysteine 83-cysteine 160 and cysteine 138-cysteine 152.

This sequence belongs to the alpha-type phospholipase A2 inhibitor family. As to quaternary structure, homotrimer; non-covalently linked. Expressed by the liver.

It is found in the secreted. Functionally, this phospholipase A2 inhibitor binds directly phospholipase A2 in the presence or absence of calcium. This is Phospholipase A2 inhibitor from Bothrops alternatus (Urutu).